Reading from the N-terminus, the 558-residue chain is Dihydroxy-acid dehydratase (558 aa).

Aspartate 78 serves as a coordination point for Mg(2+). Position 119 (cysteine 119) interacts with [2Fe-2S] cluster. The Mg(2+) site is built by aspartate 120 and lysine 121. Residue lysine 121 is modified to N6-carboxylysine. Cysteine 192 contacts [2Fe-2S] cluster. Residue glutamate 445 coordinates Mg(2+). The active-site Proton acceptor is serine 471.

Belongs to the IlvD/Edd family. In terms of assembly, homodimer. Requires [2Fe-2S] cluster as cofactor. It depends on Mg(2+) as a cofactor.

The enzyme catalyses (2R)-2,3-dihydroxy-3-methylbutanoate = 3-methyl-2-oxobutanoate + H2O. The catalysed reaction is (2R,3R)-2,3-dihydroxy-3-methylpentanoate = (S)-3-methyl-2-oxopentanoate + H2O. It participates in amino-acid biosynthesis; L-isoleucine biosynthesis; L-isoleucine from 2-oxobutanoate: step 3/4. The protein operates within amino-acid biosynthesis; L-valine biosynthesis; L-valine from pyruvate: step 3/4. Functions in the biosynthesis of branched-chain amino acids. Catalyzes the dehydration of (2R,3R)-2,3-dihydroxy-3-methylpentanoate (2,3-dihydroxy-3-methylvalerate) into 2-oxo-3-methylpentanoate (2-oxo-3-methylvalerate) and of (2R)-2,3-dihydroxy-3-methylbutanoate (2,3-dihydroxyisovalerate) into 2-oxo-3-methylbutanoate (2-oxoisovalerate), the penultimate precursor to L-isoleucine and L-valine, respectively. This Akkermansia muciniphila (strain ATCC BAA-835 / DSM 22959 / JCM 33894 / BCRC 81048 / CCUG 64013 / CIP 107961 / Muc) protein is Dihydroxy-acid dehydratase.